We begin with the raw amino-acid sequence, 339 residues long: Retroviral-like aspartic protease 1 (339 aa).

The propeptide occupies 1 to 188 (MRNPGGPGWA…SEPEEILFAN (188 aa)). Residues 34–53 (VPAPFNSSRQGKNTAQPTEP) are disordered. Positions 38–53 (FNSSRQGKNTAQPTEP) are enriched in polar residues. An N-linked (GlcNAc...) asparagine glycan is attached at asparagine 39. Residues 55–75 (LSSVIAPTLFCAFLYLACVTA) traverse the membrane as a helical segment. The 82-residue stretch at 205–286 (VRFLVDSGAQ…AEEAIIGTDV (82 aa)) folds into the Peptidase A2 domain. Aspartate 210 is an active-site residue. A glycan (N-linked (GlcNAc...) asparagine) is linked at asparagine 274. The propeptide occupies 325–339 (LIEEEEGSSAPEGSH).

As to quaternary structure, homodimer. In terms of processing, undergoes autocleavage which is necessary for activation of the protein. As to expression, highly expressed in stratified epithelia in skin, tongue, esophagus, forestomach and vagina. Also expressed in trachea, urinary bladder and thymus. Undetectable in simple epithelia. Within the epidermis, expressed exclusively in the granular layer (at protein level). Levels are elevated in benign skin tumors but are down-regulated in squamous cell carcinomas.

The protein localises to the membrane. In terms of biological role, protease responsible for filaggrin processing, essential for the maintenance of a proper epidermis organization. This Mus musculus (Mouse) protein is Retroviral-like aspartic protease 1.